The following is a 125-amino-acid chain: Photoactive yellow protein (125 aa).

The PAS domain maps to 23-86; sequence IDDLAFGAIQ…GRFREGVANG (64 aa). Residue Cys69 is modified to S-(4-hydroxycinnamyl)cysteine.

This sequence belongs to the photoactive yellow protein family. Post-translationally, the 4-hydroxycinnamic acid (p-coumaric acid) chromophore is covalently bound via a thioester linkage.

In terms of biological role, this photoactive protein is a photoreceptor with kinetics similar to that of rhodopsin. The polypeptide is Photoactive yellow protein (pyp) (Rhodothalassium salexigens (Rhodospirillum salexigens)).